The chain runs to 83 residues: Normal mucosa of esophagus-specific gene 1 protein (83 aa).

This sequence belongs to the complex I NDUFA4 subunit family. Expressed mainly in stomach, placenta, small intestine and colon, as well as in normal mucosa of esophagus. Down-regulated in esophageal squamous cell carcinoma.

Its subcellular location is the nucleus. In Homo sapiens (Human), this protein is Normal mucosa of esophagus-specific gene 1 protein (NMES1).